Here is a 217-residue protein sequence, read N- to C-terminus: Probable transaldolase (217 aa).

Lys-83 functions as the Schiff-base intermediate with substrate in the catalytic mechanism.

Belongs to the transaldolase family. Type 3B subfamily.

The protein localises to the cytoplasm. It carries out the reaction D-sedoheptulose 7-phosphate + D-glyceraldehyde 3-phosphate = D-erythrose 4-phosphate + beta-D-fructose 6-phosphate. Its pathway is carbohydrate degradation; pentose phosphate pathway; D-glyceraldehyde 3-phosphate and beta-D-fructose 6-phosphate from D-ribose 5-phosphate and D-xylulose 5-phosphate (non-oxidative stage): step 2/3. Transaldolase is important for the balance of metabolites in the pentose-phosphate pathway. This chain is Probable transaldolase, found in Ruegeria pomeroyi (strain ATCC 700808 / DSM 15171 / DSS-3) (Silicibacter pomeroyi).